A 461-amino-acid polypeptide reads, in one-letter code: Coronin-1A (461 aa).

Ser2 carries the post-translational modification N-acetylserine. A Phosphoserine; by PKC modification is found at Ser2. WD repeat units follow at residues 13–63, 73–110, 123–160, 164–204, 207–251, 258–296, and 302–349; these read HVFG…LVLP, NVPLVCGHTAPVLDIAWCPHNDNVIASGSEDCTVMVWE, PVVTLEGHTKRVGIVAWHPTAQNVLLSAGCDNVILVWD, GAAV…RVIE, KGTV…ALWD, PLSLQELDTSSGVLLPFFDPDTNIVYLCGKGDSSIRYFE, and PFLH…EPIA. The segment covering 407–418 has biased composition (basic and acidic residues); sequence NRGLDSARRRAT. A disordered region spans residues 407 to 431; the sequence is NRGLDSARRRATPEPSSTLSSDTVS. Residue Ser412 is modified to Phosphoserine; by PKC. Thr418 is subject to Phosphothreonine. Positions 420-430 are enriched in polar residues; sequence EPSSTLSSDTV. Position 422 is a phosphoserine (Ser422). The stretch at 425 to 461 forms a coiled coil; it reads LSSDTVSRLEEDVRNLNAIVQKLQERLDRLEETVQAK.

The protein belongs to the WD repeat coronin family. As to quaternary structure, binds actin. Phosphorylation at Ser-412 by PKC strongly down-regulates the association with actin. In terms of processing, polyubiquitinated by RNF128 with 'Lys-48'-linked chains, leading to proteasomal degradation.

Its subcellular location is the cytoplasm. The protein localises to the cytoskeleton. It is found in the cell cortex. It localises to the cytoplasmic vesicle. The protein resides in the phagosome membrane. May be a crucial component of the cytoskeleton of highly motile cells, functioning both in the invagination of large pieces of plasma membrane, as well as in forming protrusions of the plasma membrane involved in cell locomotion. The sequence is that of Coronin-1A (Coro1a) from Rattus norvegicus (Rat).